Consider the following 430-residue polypeptide: MTASLKAIDGSAELTTLMTDLGRQARAAARILALAPPEQKNRALEAMERAIRAGADKILAANAEDVDDAKAAGTTSAFLDRLTLTPARVEAMAEGIAVVRGIADPVGTVTESWQRPNGMTIERVRVPLGVVAVIFESRPNVAADAGVLCLKSGNAVILRGGSESFRSCRAIHDCLVQGLREAGLPDAAITLVPTRDRAAVGLLLAGLDGSVDVIVPRGGKSLVARVESEARVPVFAHLEGVNHVYVDRSADLEMAKSIVLNAKMRRTGVCGAAETLLIDRAAATTHLAPLVTMLIDSGCEVRGDQTVQKVDPRVKPASDEDWDTEYLDAVIAAKLVDGVDGAIAHIHNHGSHHTDAIVAEDVQAAAKFLGEVDSAIVLHNASTQFADGGEFGFGAEIGIATGKFHARGPVGAEQLTTFKYRIHGSGQTRP.

The protein belongs to the gamma-glutamyl phosphate reductase family.

Its subcellular location is the cytoplasm. It carries out the reaction L-glutamate 5-semialdehyde + phosphate + NADP(+) = L-glutamyl 5-phosphate + NADPH + H(+). The protein operates within amino-acid biosynthesis; L-proline biosynthesis; L-glutamate 5-semialdehyde from L-glutamate: step 2/2. Catalyzes the NADPH-dependent reduction of L-glutamate 5-phosphate into L-glutamate 5-semialdehyde and phosphate. The product spontaneously undergoes cyclization to form 1-pyrroline-5-carboxylate. The chain is Gamma-glutamyl phosphate reductase from Rhodopseudomonas palustris (strain TIE-1).